The sequence spans 1025 residues: Multidrug resistance protein MdtC (1025 aa).

The next 12 helical transmembrane spans lie at 3 to 23 (FFALFIYRPVATILLSVAITL), 333 to 353 (EVEQTLIISVALVILVVFLFL), 360 to 380 (IIPAVAVPVSLIGTFAAMYLC), 387 to 407 (LSLMALTIATGFVVDDAIVVL), 431 to 451 (VGFTVLSMSLSLVAVFLPLLL), 463 to 483 (FAVTLSVAIGISLLVSLTLTP), 528 to 548 (LVGVVLLGTIALNIWLYISIP), 853 to 873 (VILIIAAIATVYIVLGILYES), 875 to 895 (VHPLTILSTLPSAGVGALLAL), 897 to 917 (LFNAPFSLIALIGIMLLIGIV), 953 to 973 (PIMMTTLAALFGALPLVLSGG), and 984 to 1004 (ITIVGGLVMSQLLTLYTTPVV).

The protein belongs to the resistance-nodulation-cell division (RND) (TC 2.A.6) family. MdtC subfamily. As to quaternary structure, part of a tripartite efflux system composed of MdtA, MdtB and MdtC. MdtC forms a heteromultimer with MdtB.

The protein localises to the cell inner membrane. In Shigella boydii serotype 4 (strain Sb227), this protein is Multidrug resistance protein MdtC.